Consider the following 155-residue polypeptide: V-type proton ATPase 16 kDa proteolipid subunit c (155 aa).

At 1 to 10 the chain is on the lumenal side; it reads MSESKSGPEY. The helical transmembrane segment at 11 to 33 threads the bilayer; it reads ASFFAVMGASAAMVFSALGAAYG. The Cytoplasmic portion of the chain corresponds to 34-55; that stretch reads TAKSGTGIAAMSVMRPEQIMKS. A helical transmembrane segment spans residues 56–76; it reads IIPVVMAGIIAIYGLVVAVLI. Over 77–92 the chain is Lumenal; that stretch reads ANSLNDDISLYKSFLQ. A helical membrane pass occupies residues 93 to 114; that stretch reads LGAGLSVGLSGLAAGFAIGIVG. Residues 115–131 are Cytoplasmic-facing; that stretch reads DAGVRGTAQQPRLFVGM. Residues 132–152 traverse the membrane as a helical segment; sequence ILILIFAEVLGLYGLIVALIL. Residues 153-155 are Lumenal-facing; it reads STK.

Belongs to the V-ATPase proteolipid subunit family. In terms of assembly, V-ATPase is a heteromultimeric enzyme made up of two complexes: the ATP-hydrolytic V1 complex and the proton translocation V0 complex. The V1 complex consists of three catalytic AB heterodimers that form a heterohexamer, three peripheral stalks each consisting of EG heterodimers, one central rotor including subunits D and F, and the regulatory subunits C and H. The proton translocation complex V0 consists of the proton transport subunit a, a ring of proteolipid subunits c9c'', rotary subunit d, subunits e and f, and the accessory subunits ATP6AP1/Ac45 and ATP6AP2/PRR. Interacts with the V0 complex V-ATPase subunit a4 ATP6V0A4. Interacts with LASS2. Interacts with RNF182; this interaction leads to ubiquitination and degradation via the proteasome pathway. As to quaternary structure, (Microbial infection) Interacts with HTLV-1 accessory protein p12I. In terms of processing, ubiquitinated by RNF182, leading to its degradation via the ubiquitin-proteasome pathway.

Its subcellular location is the cytoplasmic vesicle. The protein resides in the clathrin-coated vesicle membrane. It is found in the secretory vesicle. The protein localises to the synaptic vesicle membrane. In terms of biological role, proton-conducting pore forming subunit of the V0 complex of vacuolar(H+)-ATPase (V-ATPase), a multisubunit enzyme composed of a peripheral complex (V1) that hydrolyzes ATP and a membrane integral complex (V0) that translocates protons. V-ATPase is responsible for acidifying and maintaining the pH of intracellular compartments, and in some cell types, it is targeted to the plasma membrane, where it is responsible for acidifying the extracellular environment. This Homo sapiens (Human) protein is V-type proton ATPase 16 kDa proteolipid subunit c (ATP6V0C).